The sequence spans 142 residues: Large ribosomal subunit protein uL13 (142 aa).

It belongs to the universal ribosomal protein uL13 family. In terms of assembly, part of the 50S ribosomal subunit.

Its function is as follows. This protein is one of the early assembly proteins of the 50S ribosomal subunit, although it is not seen to bind rRNA by itself. It is important during the early stages of 50S assembly. The protein is Large ribosomal subunit protein uL13 of Hamiltonella defensa subsp. Acyrthosiphon pisum (strain 5AT).